The sequence spans 199 residues: MGYLVPTVIEQSSRGERAYDIYSRLLKDRIIMLTGPVEDGMANSIIAQLLFLDAQDNTKDIYLYVNTPGGSVSAGLAIVDTMNFIKSDVLTIVMGMAASMGTIIASSGTKGKRFMLPNAEYLIHQPMGGAGQGTQQTDMAIVAEQLLKTRKRLEQILADNSNRSLEQIHKDAERDHWMDAKETLEYGFIDEIMENNSLK.

Catalysis depends on Ser99, which acts as the Nucleophile. Residue His124 is part of the active site.

Belongs to the peptidase S14 family. As to quaternary structure, fourteen ClpP subunits assemble into 2 heptameric rings which stack back to back to give a disk-like structure with a central cavity, resembling the structure of eukaryotic proteasomes.

The protein localises to the cytoplasm. The enzyme catalyses Hydrolysis of proteins to small peptides in the presence of ATP and magnesium. alpha-casein is the usual test substrate. In the absence of ATP, only oligopeptides shorter than five residues are hydrolyzed (such as succinyl-Leu-Tyr-|-NHMec, and Leu-Tyr-Leu-|-Tyr-Trp, in which cleavage of the -Tyr-|-Leu- and -Tyr-|-Trp bonds also occurs).. Its function is as follows. Cleaves peptides in various proteins in a process that requires ATP hydrolysis. Has a chymotrypsin-like activity. Plays a major role in the degradation of misfolded proteins. This is ATP-dependent Clp protease proteolytic subunit from Lactococcus lactis subsp. cremoris (strain SK11).